The chain runs to 872 residues: G-type lectin S-receptor-like serine/threonine-protein kinase At5g35370 (872 aa).

An N-terminal signal peptide occupies residues 1-26 (MKSTFLLLLLLLSLNLLFVFVSCASS). At 27 to 443 (IEFVYPNFTA…NNNRGGSSFP (417 aa)) the chain is on the extracellular side. N-linked (GlcNAc...) asparagine glycosylation is found at Asn33, Asn148, and Asn239. The Bulb-type lectin domain maps to 35–156 (TASNLRFVDS…LNVSLWESFD (122 aa)). The EGF-like; atypical domain maps to 283–322 (PMDSCQIPFVCGKLGLCNLDNASENQSCSCPDEMRMDAGK). Disulfide bonds link Cys287/Cys299 and Cys293/Cys310. Asn303, Asn307, Asn342, Asn379, and Asn389 each carry an N-linked (GlcNAc...) asparagine glycan. Residues 338 to 423 (CEARNISYLE…HDLIGYVKLS (86 aa)) form the PAN domain. Disulfide bonds link Cys372–Cys394 and Cys376–Cys382. The helical transmembrane segment at 444–464 (VIALVLLPCSGFFLLIALGLL) threads the bilayer. Residues 465–872 (WWRRCAVMRY…IASQEVSGPR (408 aa)) lie on the Cytoplasmic side of the membrane. In terms of domain architecture, Protein kinase spans 515–814 (ENFKMQIGSG…GSIPLGNPRM (300 aa)). ATP is bound by residues 521–529 (IGSGGFGSV) and Lys543. The interval 603–620 (GNGPVLEWQERFDIALGT) is caM-binding. The active-site Proton acceptor is the Asp639. Ser656 is modified (phosphoserine). Residue Thr673 is modified to Phosphothreonine. A phosphoserine mark is found at Ser716 and Ser859. Positions 836–872 (QNGESETMVFHRRESSNSGGSRQSASYIASQEVSGPR) are disordered. Residues 851 to 861 (SNSGGSRQSAS) are compositionally biased toward low complexity. The span at 862–872 (YIASQEVSGPR) shows a compositional bias: polar residues.

It belongs to the protein kinase superfamily. Ser/Thr protein kinase family.

The protein resides in the cell membrane. It catalyses the reaction L-seryl-[protein] + ATP = O-phospho-L-seryl-[protein] + ADP + H(+). It carries out the reaction L-threonyl-[protein] + ATP = O-phospho-L-threonyl-[protein] + ADP + H(+). This Arabidopsis thaliana (Mouse-ear cress) protein is G-type lectin S-receptor-like serine/threonine-protein kinase At5g35370.